Consider the following 340-residue polypeptide: CMP-N-acetylneuraminate-beta-galactosamide-alpha-2,3-sialyltransferase 1 (340 aa).

The Cytoplasmic portion of the chain corresponds to 1–13 (MVTLRKRTLKVLT). A helical; Signal-anchor for type II membrane protein membrane pass occupies residues 14–34 (FLVLFIFLTSFFLNYSHTMVA). At 35–340 (TTWFPKQMVL…INKIRIFKGR (306 aa)) the chain is on the lumenal side. 3 cysteine pairs are disulfide-bonded: Cys-59–Cys-64, Cys-61–Cys-139, and Cys-142–Cys-281. A glycan (N-linked (GlcNAc...) asparagine) is linked at Asn-79. Substrate is bound at residue Gln-105. Asn-114 carries an N-linked (GlcNAc...) asparagine glycan. Positions 147 and 170 each coordinate substrate. Residue Asn-201 is glycosylated (N-linked (GlcNAc...) asparagine). Residues Tyr-230, Tyr-266, Gly-270, Gly-290, His-299, and His-316 each contribute to the substrate site. Asn-323 carries N-linked (GlcNAc...) asparagine glycosylation.

The protein belongs to the glycosyltransferase 29 family. In terms of processing, the soluble form derives from the membrane form by proteolytic processing. Expressed in several tissues. Highest expression in lung, liver, skeletal muscle, kidney, pancreas, spleen and placenta.

The protein localises to the golgi apparatus. It is found in the golgi stack membrane. It localises to the trans-Golgi network membrane. Its subcellular location is the secreted. It catalyses the reaction a beta-D-galactosyl-(1-&gt;3)-N-acetyl-alpha-D-galactosaminyl derivative + CMP-N-acetyl-beta-neuraminate = an N-acetyl-alpha-neuraminyl-(2-&gt;3)-beta-D-galactosyl-(1-&gt;3)-N-acetyl-alpha-D-galactosaminyl derivative + CMP + H(+). It carries out the reaction a ganglioside GM1 + CMP-N-acetyl-beta-neuraminate = a ganglioside GD1a + CMP + H(+). The enzyme catalyses a ganglioside GM1 (d18:1(4E)) + CMP-N-acetyl-beta-neuraminate = a ganglioside GD1a (d18:1(4E)) + CMP + H(+). The catalysed reaction is ganglioside GM1 (d18:1(4E)/18:0) + CMP-N-acetyl-beta-neuraminate = ganglioside GD1a (18:1(4E)/18:0) + CMP + H(+). It catalyses the reaction a ganglioside GA1 + CMP-N-acetyl-beta-neuraminate = a ganglioside GM1b + CMP + H(+). It carries out the reaction a ganglioside GA1 (d18:1(4E)) + CMP-N-acetyl-beta-neuraminate = a ganglioside GM1b (d18:1(4E)) + CMP + H(+). The enzyme catalyses a ganglioside GD1b + CMP-N-acetyl-beta-neuraminate = a ganglioside GT1b + CMP + H(+). The catalysed reaction is a 3-O-[beta-D-galactosyl-(1-&gt;3)-N-acetyl-alpha-D-galactosaminyl]-L-threonyl-[protein] + CMP-N-acetyl-beta-neuraminate = a 3-O-[N-acetyl-alpha-neuraminyl-(2-&gt;3)-beta-D-galactosyl-(1-&gt;3)-N-acetyl-alpha-D-galactosaminyl]-L-threonyl-[protein] + CMP + H(+). It catalyses the reaction a 3-O-[beta-D-galactosyl-(1-&gt;3)-N-acetyl-alpha-D-galactosaminyl]-L-seryl-[protein] + CMP-N-acetyl-beta-neuraminate = 3-O-[N-acetyl-alpha-neuraminyl-(2-&gt;3)-beta-D-galactosyl-(1-&gt;3)-N-acetyl-alpha-D-galactosaminyl]-L-seryl-[protein] + CMP + H(+). Its pathway is protein modification; protein glycosylation. It participates in glycolipid biosynthesis. A beta-galactoside alpha2-&gt;3 sialyltransferase involved in terminal sialylation of glycoproteins and glycolipids. Catalyzes the transfer of sialic acid (N-acetyl-neuraminic acid; Neu5Ac) from the nucleotide sugar donor CMP-Neu5Ac onto acceptor Galbeta-(1-&gt;3)-GalNAc-terminated glycoconjugates through an alpha2-3 linkage. Adds sialic acid to the core 1 O-glycan, Galbeta-(1-&gt;3)-GalNAc-O-Ser/Thr, which is a major structure of mucin-type O-glycans. As part of a homeostatic mechanism that regulates CD8-positive T cell numbers, sialylates core 1 O-glycans of T cell glycoproteins, SPN/CD43 and PTPRC/CD45. Prevents premature apoptosis of thymic CD8-positive T cells prior to peripheral emigration, whereas in the secondary lymphoid organs controls the survival of CD8-positive memory T cells generated following a successful immune response. Transfers sialic acid to asialofetuin, presumably onto Galbeta-(1-&gt;3)-GalNAc-O-Ser. Sialylates GM1a, GA1 and GD1b gangliosides to form GD1a, GM1b and GT1b, respectively. In Homo sapiens (Human), this protein is CMP-N-acetylneuraminate-beta-galactosamide-alpha-2,3-sialyltransferase 1.